Reading from the N-terminus, the 40-residue chain is uncharacterized protein (40 aa).

This is an uncharacterized protein from Myxococcus xanthus (strain DK1622).